The sequence spans 326 residues: Tetraacyldisaccharide 4'-kinase (326 aa).

ATP is bound at residue 55 to 62; the sequence is TAGGNGKT.

This sequence belongs to the LpxK family.

The catalysed reaction is a lipid A disaccharide + ATP = a lipid IVA + ADP + H(+). The protein operates within glycolipid biosynthesis; lipid IV(A) biosynthesis; lipid IV(A) from (3R)-3-hydroxytetradecanoyl-[acyl-carrier-protein] and UDP-N-acetyl-alpha-D-glucosamine: step 6/6. Transfers the gamma-phosphate of ATP to the 4'-position of a tetraacyldisaccharide 1-phosphate intermediate (termed DS-1-P) to form tetraacyldisaccharide 1,4'-bis-phosphate (lipid IVA). The polypeptide is Tetraacyldisaccharide 4'-kinase (Klebsiella pneumoniae subsp. pneumoniae (strain ATCC 700721 / MGH 78578)).